The primary structure comprises 1265 residues: Protein diaphanous homolog 1 (1265 aa).

Residue methionine 1 is modified to N-acetylmethionine. The segment covering 1–12 (MEPSGGGLGPGR) has biased composition (gly residues). Disordered stretches follow at residues 1-42 (MEPS…FTLK) and 54-83 (SMRI…TAQS). Serine 22 is subject to Phosphoserine. Basic and acidic residues predominate over residues 54–65 (SMRIKKEKEKPN). Polar residues predominate over residues 67 to 83 (AHRNSSASYGDDPTAQS). Positions 84-449 (LQDISDDQVL…QIVLHKNGTD (366 aa)) constitute a GBD/FH3 domain. Residues 474–568 (VEKSEAKATE…KKEMASLSAV (95 aa)) are a coiled coil. The disordered stretch occupies residues 573 to 742 (SVSSSAAVPQ…PPPPGMGVPP (170 aa)). Composition is skewed to pro residues over residues 594–628 (IPPP…PPLP) and 645–742 (IPPP…GVPP). The 133-residue stretch at 625–757 (PPLPGGACIS…FGIPAAPVLP (133 aa)) folds into the FH1 domain. At threonine 761 the chain carries Phosphothreonine. Positions 762 to 1164 (PKKVYKPEVQ…MRRAKLAKEK (403 aa)) constitute an FH2 domain. N6-acetyllysine is present on residues lysine 1050 and lysine 1096. Tyrosine 1114 carries the phosphotyrosine modification. Residues 1141 to 1185 (AVKENQKRRETEEKMRRAKLAKEKAEKERLEKQQKREQLIDMNAE) adopt a coiled-coil conformation. The DAD domain maps to 1187–1215 (DETGVMDSLLEALQSGAAFRRKRGPRQVN). Serine 1247 bears the Phosphoserine mark.

It belongs to the formin homology family. Diaphanous subfamily. In terms of assembly, homodimer. Interacts with the GTP-bound form of RHOA. Interacts with RHOC, PFY1, MAPRE1, BAIAP2 and APC. Interacts with SCAI. Interacts with DCAF7, via FH2 domain. Interacts with NCDN. Interacts with OSBPL10, OSBPL2, VIM, TUBB and DYN1. Post-translationally, phosphorylation at Thr-761 is stimulated by cAMP and regulates stability, complex formation and mitochondrial movement. Expressed in testis. Present in Sertoli cells (at protein level).

It localises to the cell membrane. It is found in the cell projection. The protein resides in the ruffle membrane. Its subcellular location is the cytoplasm. The protein localises to the cytoskeleton. It localises to the microtubule organizing center. It is found in the centrosome. The protein resides in the spindle. Its subcellular location is the nucleus. Actin nucleation and elongation factor required for the assembly of F-actin structures, such as actin cables and stress fibers. Binds to the barbed end of the actin filament and slows down actin polymerization and depolymerization. Required for cytokinesis, and transcriptional activation of the serum response factor. DFR proteins couple Rho and Src tyrosine kinase during signaling and the regulation of actin dynamics. Functions as a scaffold protein for MAPRE1 and APC to stabilize microtubules and promote cell migration. Has neurite outgrowth promoting activity. Acts in a Rho-dependent manner to recruit PFY1 to the membrane. The MEMO1-RHOA-DIAPH1 signaling pathway plays an important role in ERBB2-dependent stabilization of microtubules at the cell cortex. It controls the localization of APC and CLASP2 to the cell membrane, via the regulation of GSK3B activity. In turn, membrane-bound APC allows the localization of the MACF1 to the cell membrane, which is required for microtubule capture and stabilization. Plays a role in the regulation of cell morphology and cytoskeletal organization. Required in the control of cell shape. Also acts as an actin nucleation and elongation factor in the nucleus by promoting nuclear actin polymerization inside the nucleus to drive serum-dependent SRF-MRTFA activity. In Rattus norvegicus (Rat), this protein is Protein diaphanous homolog 1.